Reading from the N-terminus, the 382-residue chain is Na(+)/H(+) antiporter NhaA (382 aa).

Helical transmembrane passes span 14–34, 49–69, 87–107, 117–137, 146–166, 171–191, 205–225, 252–272, 285–305, 321–341, and 356–376; these read AGGI…NSSL, MSVS…LIGL, IFPA…YVAF, GWAI…ALLG, VFLL…IAFF, LSVL…LLNA, FILW…GVVL, VAFA…LEGV, VALG…YLAV, IFAV…ISSL, and LGIL…LSIS.

This sequence belongs to the NhaA Na(+)/H(+) (TC 2.A.33) antiporter family.

The protein localises to the cell inner membrane. It catalyses the reaction Na(+)(in) + 2 H(+)(out) = Na(+)(out) + 2 H(+)(in). Na(+)/H(+) antiporter that extrudes sodium in exchange for external protons. The chain is Na(+)/H(+) antiporter NhaA from Aliivibrio fischeri (strain ATCC 700601 / ES114) (Vibrio fischeri).